The chain runs to 598 residues: Elongation factor 4 (598 aa).

The region spanning 2-184 (QHIRNFSIIA…AIVARVPAPK (183 aa)) is the tr-type G domain. GTP-binding positions include 14 to 19 (DHGKST) and 131 to 134 (NKID).

This sequence belongs to the TRAFAC class translation factor GTPase superfamily. Classic translation factor GTPase family. LepA subfamily.

It is found in the cell inner membrane. The enzyme catalyses GTP + H2O = GDP + phosphate + H(+). Required for accurate and efficient protein synthesis under certain stress conditions. May act as a fidelity factor of the translation reaction, by catalyzing a one-codon backward translocation of tRNAs on improperly translocated ribosomes. Back-translocation proceeds from a post-translocation (POST) complex to a pre-translocation (PRE) complex, thus giving elongation factor G a second chance to translocate the tRNAs correctly. Binds to ribosomes in a GTP-dependent manner. The sequence is that of Elongation factor 4 from Azoarcus sp. (strain BH72).